We begin with the raw amino-acid sequence, 209 residues long: Large ribosomal subunit protein uL3 (209 aa).

The disordered stretch occupies residues 133-153 (THGNSLSHRAPGSIGQNQTPG). Gln-150 carries the post-translational modification N5-methylglutamine.

Belongs to the universal ribosomal protein uL3 family. As to quaternary structure, part of the 50S ribosomal subunit. Forms a cluster with proteins L14 and L19. In terms of processing, methylated by PrmB.

In terms of biological role, one of the primary rRNA binding proteins, it binds directly near the 3'-end of the 23S rRNA, where it nucleates assembly of the 50S subunit. In Pectobacterium atrosepticum (strain SCRI 1043 / ATCC BAA-672) (Erwinia carotovora subsp. atroseptica), this protein is Large ribosomal subunit protein uL3.